A 523-amino-acid polypeptide reads, in one-letter code: GMP synthase [glutamine-hydrolyzing] (523 aa).

Positions Lys-8–Lys-205 constitute a Glutamine amidotransferase type-1 domain. Catalysis depends on Cys-85, which acts as the Nucleophile. Residues His-179 and Glu-181 contribute to the active site. One can recognise a GMPS ATP-PPase domain in the interval Trp-206–Arg-398. Ser-233–Ser-239 contacts ATP.

In terms of assembly, homodimer.

The catalysed reaction is XMP + L-glutamine + ATP + H2O = GMP + L-glutamate + AMP + diphosphate + 2 H(+). The protein operates within purine metabolism; GMP biosynthesis; GMP from XMP (L-Gln route): step 1/1. Its function is as follows. Catalyzes the synthesis of GMP from XMP. The polypeptide is GMP synthase [glutamine-hydrolyzing] (guaA) (Haemophilus influenzae (strain ATCC 51907 / DSM 11121 / KW20 / Rd)).